The following is a 526-amino-acid chain: NAD(P)H-quinone oxidoreductase subunit 2 (526 aa).

14 helical membrane passes run 16–36 (ILPEGIVVITLLVVLVGDLIL), 43–63 (WTPYAAIVGLLGAIVALYTQW), 80–100 (LSIAFRGIIAISAITTILMSV), 110–130 (LGEFICILLTATLGAMFLSGA), 133–153 (LVMIFISLETLSISSYLLTGY), 168–188 (LLIGAASSAIFLYGISLLYGL), 212–232 (LALVIALVFAIAGISFKISAV), 246–266 (PTPVVAFLSVGSKAAGFALAI), 280–300 (WHFVFTALAILSMVLGNVVAL), 308–328 (LLAYSSIGQAGFVMIGLLANT), 336–356 (IFYLLVYLFMNLGGFTCVILF), 380–400 (LGLSLCLLSLGGIPPLAGFFG), 402–422 (IYLFWAGWQAGLYWLVLLGLI), and 468–488 (VGLILSVLATSLAGILSNPLF).

This sequence belongs to the complex I subunit 2 family. NDH-1 can be composed of about 15 different subunits; different subcomplexes with different compositions have been identified which probably have different functions.

It localises to the cellular thylakoid membrane. It catalyses the reaction a plastoquinone + NADH + (n+1) H(+)(in) = a plastoquinol + NAD(+) + n H(+)(out). It carries out the reaction a plastoquinone + NADPH + (n+1) H(+)(in) = a plastoquinol + NADP(+) + n H(+)(out). Its function is as follows. NDH-1 shuttles electrons from an unknown electron donor, via FMN and iron-sulfur (Fe-S) centers, to quinones in the respiratory and/or the photosynthetic chain. The immediate electron acceptor for the enzyme in this species is believed to be plastoquinone. Couples the redox reaction to proton translocation, and thus conserves the redox energy in a proton gradient. Cyanobacterial NDH-1 also plays a role in inorganic carbon-concentration. In Trichodesmium erythraeum (strain IMS101), this protein is NAD(P)H-quinone oxidoreductase subunit 2.